The chain runs to 121 residues: Group 1 truncated hemoglobin (121 aa).

An N-acetylmethionine modification is found at methionine 1. Heme is bound at residue histidine 73.

This sequence belongs to the truncated hemoglobin family. Group I subfamily. In terms of assembly, monomer. The cofactor is heme.

This Tetrahymena thermophila protein is Group 1 truncated hemoglobin.